The following is a 120-amino-acid chain: Large ribosomal subunit protein uL18 (120 aa).

It belongs to the universal ribosomal protein uL18 family. Part of the 50S ribosomal subunit; part of the 5S rRNA/L5/L18/L25 subcomplex. Contacts the 5S and 23S rRNAs.

In terms of biological role, this is one of the proteins that bind and probably mediate the attachment of the 5S RNA into the large ribosomal subunit, where it forms part of the central protuberance. In Staphylococcus carnosus (strain TM300), this protein is Large ribosomal subunit protein uL18.